Here is a 363-residue protein sequence, read N- to C-terminus: Ferrochelatase (363 aa).

Fe cation is bound by residues His-209 and Glu-290.

Belongs to the ferrochelatase family.

It localises to the cytoplasm. The enzyme catalyses heme b + 2 H(+) = protoporphyrin IX + Fe(2+). Its pathway is porphyrin-containing compound metabolism; protoheme biosynthesis; protoheme from protoporphyrin-IX: step 1/1. In terms of biological role, catalyzes the ferrous insertion into protoporphyrin IX. The sequence is that of Ferrochelatase from Azoarcus sp. (strain BH72).